The primary structure comprises 122 residues: Large ribosomal subunit protein uL14 (122 aa).

The protein belongs to the universal ribosomal protein uL14 family. Part of the 50S ribosomal subunit. Forms a cluster with proteins L3 and L19. In the 70S ribosome, L14 and L19 interact and together make contacts with the 16S rRNA in bridges B5 and B8.

Its function is as follows. Binds to 23S rRNA. Forms part of two intersubunit bridges in the 70S ribosome. This Desulforamulus reducens (strain ATCC BAA-1160 / DSM 100696 / MI-1) (Desulfotomaculum reducens) protein is Large ribosomal subunit protein uL14.